The sequence spans 371 residues: MSDLPRISVAAPRLDGNERDYVLECMDTTWISSVGRFIVEFEKAFADYCGVKHAIACNNGTTALHLALVAMGIGPGDEVIVPSLTYIASANSVTYCGATPVLVDNDPRTFNLDAAKLEALITPRTKAIMPVHLYGQICDMDPILEVARRHNLLVIEDAAEAVGATYRGKKSGSLGDCATFSFFGNKIITTGEGGMITTNDDDLAAKMRLLRGQGMDPNRRYWFPIVGFNYRMTNIQAAIGLAQLERVDEHLAARERVVGWYEQKLARLGNRVTKPHVALTGRHVFWMYTVRLGEGLSTTRDQVIKDLDALGIESRPVFHPMHIMPPYAHLATDDLKIAEACGVDGLNLPTHAGLTEADIDRVIAALDQVLV.

Lys186 carries the post-translational modification N6-(pyridoxal phosphate)lysine.

This sequence belongs to the DegT/DnrJ/EryC1 family. As to quaternary structure, homodimer. Pyridoxal 5'-phosphate serves as cofactor.

The enzyme catalyses GDP-alpha-D-perosamine + 2-oxoglutarate = GDP-4-dehydro-alpha-D-rhamnose + L-glutamate. The protein operates within bacterial outer membrane biogenesis; LPS O-antigen biosynthesis. Its function is as follows. Catalyzes the synthesis of GDP-perosamine from GDP-4-keto-6-deoxy-D-mannose and L-glutamate. Can use only L-glutamate as amino donor. In vitro, can also use GDP-4-keto-3,6-dideoxymannose to produce GDP-3-deoxyperosamine. Involved in the formation of S-LPS, which is required for attachment of the protein S-layer to the outer membrane surface. This chain is GDP-perosamine synthase, found in Caulobacter vibrioides (strain ATCC 19089 / CIP 103742 / CB 15) (Caulobacter crescentus).